Consider the following 150-residue polypeptide: Con-Ins Im1 (150 aa).

The first 25 residues, methionine 1–alanine 25, serve as a signal peptide directing secretion. 4 cysteine pairs are disulfide-bonded: cysteine 31–cysteine 133, cysteine 46–cysteine 136, cysteine 58–cysteine 149, and cysteine 135–cysteine 140. A propeptide spans glycine 64–proline 111 (c peptide). Glutamate 144 carries the 4-carboxyglutamate; partial modification.

It belongs to the insulin family. Heterodimer of A and B chains; disulfide-linked. Expressed by the venom gland.

The protein resides in the secreted. Its function is as follows. This venom insulin facilitates prey capture by rapidly inducing hypoglycemic shock. Intraperitoneal injection of this peptide into zebrafish lowers blood glucose with the same potency than human insulin. In vivo, when applied to water, this peptide reduces overall locomotor activity of zebrafish larvae, observed as a significant decrease in the percentage of time spent swimming and movement frequency. The chain is Con-Ins Im1 from Conus imperialis (Imperial cone).